A 402-amino-acid chain; its full sequence is CMP-sialic acid transporter 3 (402 aa).

Over 1-42 the chain is Cytoplasmic; that stretch reads MSGEVECRVCHAKVQVPMAAAAVSKAYDIHRSSVSSRQRALN. A helical membrane pass occupies residues 43-63; the sequence is VLLVSGDCVLAGLQPILVYMC. Residues 64-73 lie on the Lumenal side of the membrane; the sequence is KVDGKFKFSP. Residues 74 to 94 traverse the membrane as a helical segment; that stretch reads VSVNFLTEITKIIFAIIMLCI. Topologically, residues 95–118 are cytoplasmic; sequence QARRLKVGEKPFLTVSTFMQAARN. A helical membrane pass occupies residues 119-139; the sequence is NVLLAVPALFYAINNYMKFVM. At 140 to 146 the chain is on the lumenal side; it reads QLYFNPA. Residues 147–167 form a helical membrane-spanning segment; that stretch reads TVKMLGNLKVLVIAVLLKVIM. Over 168–170 the chain is Cytoplasmic; that stretch reads RRR. Residues 171–191 form a helical membrane-spanning segment; the sequence is FSTIQWEALALLLIGISVNQL. Over 192–202 the chain is Lumenal; it reads KSLPEGSSTLG. A helical transmembrane segment spans residues 203–223; the sequence is LPVAAGAYLYTLFFVTVPALA. At 224–243 the chain is on the cytoplasmic side; the sequence is SVYNEKALKSQFDTSIYLQN. The chain crosses the membrane as a helical span at residues 244 to 264; sequence LFLYGYGAIFNFLGLVITAII. Topologically, residues 265–280 are lumenal; the sequence is QGPSSFNILEGHSKAT. The helical transmembrane segment at 281–301 threads the bilayer; that stretch reads MFLICNNAAQGILSSFFFKYA. Topologically, residues 302–321 are cytoplasmic; the sequence is DTILKKYSSTIATIFTGVAS. The helical transmembrane segment at 322-342 threads the bilayer; the sequence is AVLFGHTLTINFVLAISIVII. The Lumenal segment spans residues 343–402; that stretch reads SMHQYLSNQIKDEVPSSKIEMGDAHEHRSKESVVVNVSDSIATEAKHRHGTDERQPLLPV.

Belongs to the nucleotide-sugar transporter family. CMP-Sialate:CMP antiporter (TC 2.A.7.12) subfamily.

Its subcellular location is the golgi apparatus membrane. In terms of biological role, sugar transporter involved in the transport of CMP-sialic acid from the cytoplasm into the Golgi. May transport important nucleotide sugars such as CMP-Kdo (2-keto-3-deoxy-D-manno-octulosonic acid) in physiological conditions. In Oryza sativa subsp. indica (Rice), this protein is CMP-sialic acid transporter 3.